Here is a 625-residue protein sequence, read N- to C-terminus: Basic helix-loop-helix ARNT-like protein 1 (625 aa).

The segment at 1–60 (MADQRMDISSTISDFMSPGPTDLLSSSLGTSGVDCNRKRKGSSTDYQESMDTDKDDPHGR) is disordered. The residue at position 17 (S17) is a Phosphoserine; by GSK3-beta. Low complexity predominate over residues 17–32 (SPGPTDLLSSSLGTSG). At T21 the chain carries Phosphothreonine; by GSK3-beta. The Nuclear localization signal motif lies at 36-41 (NRKRKG). Residues 51–60 (DTDKDDPHGR) are compositionally biased toward basic and acidic residues. The bHLH domain maps to 72 to 125 (NAREAHSQIEKRRRDKMNSFIDELASLVPTCNAMSRKLDKLTVLRMAVQHMKTL). A Phosphoserine modification is found at S78. Residue S90 is modified to Phosphoserine; by CK2. Positions 142–152 (LSDDELKHLIL) match the Nuclear export signal 1 motif. One can recognise a PAS 1 domain in the interval 143–215 (SDDELKHLIL…EQLSSSDTAP (73 aa)). K252 is covalently cross-linked (Glycyl lysine isopeptide (Lys-Gly) (interchain with G-Cter in SUMO2 and SUMO3)). K259 is covalently cross-linked (Glycyl lysine isopeptide (Lys-Gly) (interchain with G-Cter in SUMO); alternate). A Glycyl lysine isopeptide (Lys-Gly) (interchain with G-Cter in SUMO2); alternate cross-link involves residue K259. The 71-residue stretch at 325-395 (PQPVNGEIRV…ECHRQVLQTR (71 aa)) folds into the PAS 2 domain. The Nuclear export signal 2 signature appears at 360–368 (LAYLPQELL). The 44-residue stretch at 400–443 (TNCYKFKIKDGSFITLRSRWFSFMNPWTKEVEYIVSTNTVVLAN) folds into the PAC domain. 2 disordered regions span residues 454–491 (QLTA…RAGA) and 510–594 (GSSP…SPSN). Residues 507 to 587 (RIRGSSPSSC…IGIDMIDNDQ (81 aa)) are interaction with CIART. A compositionally biased stretch (low complexity) spans 510–520 (GSSPSSCGSSP). The residue at position 537 (K537) is an N6-acetyllysine.

Component of the circadian clock oscillator which includes the CRY1/2 proteins, CLOCK or NPAS2, BMAL1 or BMAL2, CSNK1D and/or CSNK1E, TIMELESS and the PER1/2/3 proteins. Forms a heterodimer with CLOCK. The CLOCK-BMAL1 heterodimer is required for E-box-dependent transactivation, for CLOCK nuclear translocation and degradation, and, for phosphorylation of both CLOCK and BMAL1. Part of a nuclear complex which also includes RACK1 and PRKCA; RACK1 and PRKCA are recruited to the complex in a circadian manner. Interacts with NPAS2. Interacts with EZH2. Interacts with SUMO3. Interacts with SIRT1. Interacts with AHR. Interacts with ID1, ID2 and ID3. Interacts with DDX4. Interacts with OGT. Interacts with EED and SUZ12. Interacts with MTA1. Interacts with CIART. Interacts with HSP90. Interacts with KAT2B and EP300. Interacts with BHLHE40/DEC1 and BHLHE41/DEC2. Interacts with RELB and the interaction is enhanced in the presence of CLOCK. Interacts with PER1, PER2, CRY1 and CRY2 and this interaction requires a translocation to the nucleus. Interaction of the CLOCK-BMAL1 heterodimer with PER or CRY inhibits transcription activation. Interaction of the CLOCK-BMAL1 with CRY1 is independent of DNA but with PER2 is off DNA. The CLOCK-BMAL1 heterodimer interacts with GSK3B. Interacts with KDM5A. Interacts with KMT2A; in a circadian manner. Interacts with UBE3A. Interacts with PRKCG. Interacts with MAGEL2. Interacts with NCOA2. Interacts with THRAP3. The CLOCK-BMAL1 heterodimer interacts with PASD1. Interacts with PASD1. Interacts with USP9X. Interacts with PIWIL2 (via PIWI domain). Interacts with HDAC3. Interacts with HNF4A. Ubiquitinated, leading to its proteasomal degradation. Deubiquitinated by USP9X. In terms of processing, O-glycosylated; contains O-GlcNAc. O-glycosylation by OGT prevents protein degradation by inhibiting ubiquitination. It also stabilizes the CLOCK-BMAL1 heterodimer thereby increasing CLOCK-BMAL1-mediated transcription of genes in the negative loop of the circadian clock such as PER1/2/3 and CRY1/2. Post-translationally, acetylated on Lys-537 by CLOCK during the repression phase of the circadian cycle. Acetylation facilitates recruitment of CRY1 protein and initiates the repression phase of the circadian cycle. Acetylated at Lys-537 by KAT5 during the activation phase of the cycle, leading to recruitment of the positive transcription elongation factor b (P-TEFb) and BRD4, followed by productive elongation of circadian transcripts. Deacetylated by SIRT1, which may result in decreased protein stability. Phosphorylated upon dimerization with CLOCK. Phosphorylation enhances the transcriptional activity, alters the subcellular localization and decreases the stability of the CLOCK-BMAL1 heterodimer by promoting its degradation. Phosphorylation shows circadian variations in the liver with a peak between CT10 to CT14. Phosphorylation at Ser-90 by CK2 is essential for its nuclear localization, its interaction with CLOCK and controls CLOCK nuclear entry. Dephosphorylation at Ser-78 is important for dimerization with CLOCK and transcriptional activity. In terms of processing, sumoylated on Lys-259 upon dimerization with CLOCK. Predominantly conjugated to poly-SUMO2/3 rather than SUMO1 and the level of these conjugates undergo rhythmic variation, peaking at CT9-CT12. Sumoylation localizes it exclusively to the PML body and promotes its ubiquitination in the PML body, ubiquitin-dependent proteasomal degradation and the transcriptional activity of the CLOCK-BMAL1 heterodimer. Post-translationally, undergoes lysosome-mediated degradation in a time-dependent manner in the liver.

The protein localises to the nucleus. It is found in the cytoplasm. It localises to the PML body. Functionally, transcriptional activator which forms a core component of the circadian clock. The circadian clock, an internal time-keeping system, regulates various physiological processes through the generation of approximately 24 hour circadian rhythms in gene expression, which are translated into rhythms in metabolism and behavior. It is derived from the Latin roots 'circa' (about) and 'diem' (day) and acts as an important regulator of a wide array of physiological functions including metabolism, sleep, body temperature, blood pressure, endocrine, immune, cardiovascular, and renal function. Consists of two major components: the central clock, residing in the suprachiasmatic nucleus (SCN) of the brain, and the peripheral clocks that are present in nearly every tissue and organ system. Both the central and peripheral clocks can be reset by environmental cues, also known as Zeitgebers (German for 'timegivers'). The predominant Zeitgeber for the central clock is light, which is sensed by retina and signals directly to the SCN. The central clock entrains the peripheral clocks through neuronal and hormonal signals, body temperature and feeding-related cues, aligning all clocks with the external light/dark cycle. Circadian rhythms allow an organism to achieve temporal homeostasis with its environment at the molecular level by regulating gene expression to create a peak of protein expression once every 24 hours to control when a particular physiological process is most active with respect to the solar day. Transcription and translation of core clock components (CLOCK, NPAS2, BMAL1, BMAL2, PER1, PER2, PER3, CRY1 and CRY2) plays a critical role in rhythm generation, whereas delays imposed by post-translational modifications (PTMs) are important for determining the period (tau) of the rhythms (tau refers to the period of a rhythm and is the length, in time, of one complete cycle). A diurnal rhythm is synchronized with the day/night cycle, while the ultradian and infradian rhythms have a period shorter and longer than 24 hours, respectively. Disruptions in the circadian rhythms contribute to the pathology of cardiovascular diseases, cancer, metabolic syndromes and aging. A transcription/translation feedback loop (TTFL) forms the core of the molecular circadian clock mechanism. Transcription factors, CLOCK or NPAS2 and BMAL1 or BMAL2, form the positive limb of the feedback loop, act in the form of a heterodimer and activate the transcription of core clock genes and clock-controlled genes (involved in key metabolic processes), harboring E-box elements (5'-CACGTG-3') within their promoters. The core clock genes: PER1/2/3 and CRY1/2 which are transcriptional repressors form the negative limb of the feedback loop and interact with the CLOCK|NPAS2-BMAL1|BMAL2 heterodimer inhibiting its activity and thereby negatively regulating their own expression. This heterodimer also activates nuclear receptors NR1D1/2 and RORA/B/G, which form a second feedback loop and which activate and repress BMAL1 transcription, respectively. BMAL1 positively regulates myogenesis and negatively regulates adipogenesis via the transcriptional control of the genes of the canonical Wnt signaling pathway. Plays a role in normal pancreatic beta-cell function; regulates glucose-stimulated insulin secretion via the regulation of antioxidant genes NFE2L2/NRF2 and its targets SESN2, PRDX3, CCLC and CCLM. Negatively regulates the mTORC1 signaling pathway; regulates the expression of MTOR and DEPTOR. Controls diurnal oscillations of Ly6C inflammatory monocytes; rhythmic recruitment of the PRC2 complex imparts diurnal variation to chemokine expression that is necessary to sustain Ly6C monocyte rhythms. Regulates the expression of HSD3B2, STAR, PTGS2, CYP11A1, CYP19A1 and LHCGR in the ovary and also the genes involved in hair growth. Plays an important role in adult hippocampal neurogenesis by regulating the timely entry of neural stem/progenitor cells (NSPCs) into the cell cycle and the number of cell divisions that take place prior to cell-cycle exit. Regulates the circadian expression of CIART and KLF11. The CLOCK-BMAL1 heterodimer regulates the circadian expression of SERPINE1/PAI1, VWF, B3, CCRN4L/NOC, NAMPT, DBP, MYOD1, PPARGC1A, PPARGC1B, SIRT1, GYS2, F7, NGFR, GNRHR, BHLHE40/DEC1, ATF4, MTA1, KLF10 and also genes implicated in glucose and lipid metabolism. Promotes rhythmic chromatin opening, regulating the DNA accessibility of other transcription factors. The NPAS2-BMAL1 heterodimer positively regulates the expression of MAOA, F7 and LDHA and modulates the circadian rhythm of daytime contrast sensitivity by regulating the rhythmic expression of adenylate cyclase type 1 (ADCY1) in the retina. The preferred binding motif for the CLOCK-BMAL1 heterodimer is 5'-CACGTGA-3', which contains a flanking adenine nucleotide at the 3-prime end of the canonical 6-nucleotide E-box sequence. CLOCK specifically binds to the half-site 5'-CAC-3', while BMAL1 binds to the half-site 5'-GTGA-3'. The CLOCK-BMAL1 heterodimer also recognizes the non-canonical E-box motifs 5'-AACGTGA-3' and 5'-CATGTGA-3'. Essential for the rhythmic interaction of CLOCK with ASS1 and plays a critical role in positively regulating CLOCK-mediated acetylation of ASS1. Plays a role in protecting against lethal sepsis by limiting the expression of immune checkpoint protein CD274 in macrophages in a PKM2-dependent manner. Regulates the diurnal rhythms of skeletal muscle metabolism via transcriptional activation of genes promoting triglyceride synthesis (DGAT2) and metabolic efficiency (COQ10B). The sequence is that of Basic helix-loop-helix ARNT-like protein 1 (BMAL1) from Pongo abelii (Sumatran orangutan).